The following is a 192-amino-acid chain: Xanthine phosphoribosyltransferase (192 aa).

The xanthine site is built by L20 and N27. 128–132 (ANGDA) provides a ligand contact to 5-phospho-alpha-D-ribose 1-diphosphate. K156 lines the xanthine pocket.

The protein belongs to the purine/pyrimidine phosphoribosyltransferase family. Xpt subfamily. Homodimer.

It is found in the cytoplasm. The enzyme catalyses XMP + diphosphate = xanthine + 5-phospho-alpha-D-ribose 1-diphosphate. Its pathway is purine metabolism; XMP biosynthesis via salvage pathway; XMP from xanthine: step 1/1. Its function is as follows. Converts the preformed base xanthine, a product of nucleic acid breakdown, to xanthosine 5'-monophosphate (XMP), so it can be reused for RNA or DNA synthesis. The chain is Xanthine phosphoribosyltransferase from Staphylococcus aureus (strain JH1).